The chain runs to 454 residues: UDP-N-acetylmuramate--L-alanine ligase (454 aa).

109-115 provides a ligand contact to ATP; it reads GTHGKTT.

Belongs to the MurCDEF family.

It is found in the cytoplasm. It carries out the reaction UDP-N-acetyl-alpha-D-muramate + L-alanine + ATP = UDP-N-acetyl-alpha-D-muramoyl-L-alanine + ADP + phosphate + H(+). The protein operates within cell wall biogenesis; peptidoglycan biosynthesis. Functionally, cell wall formation. This chain is UDP-N-acetylmuramate--L-alanine ligase, found in Protochlamydia amoebophila (strain UWE25).